A 348-amino-acid polypeptide reads, in one-letter code: uncharacterized protein (348 aa).

It localises to the virion. This is an uncharacterized protein from Acanthamoeba polyphaga mimivirus (APMV).